The primary structure comprises 351 residues: DNA-directed RNA polymerase subunit alpha (351 aa).

The alpha N-terminal domain (alpha-NTD) stretch occupies residues 1–245 (MPRRNLLKGF…EHFTVFVNFD (245 aa)). The tract at residues 261–351 (AVLELLNTKI…MRQKEEIDEA (91 aa)) is alpha C-terminal domain (alpha-CTD).

Belongs to the RNA polymerase alpha chain family. Homodimer. The RNAP catalytic core consists of 2 alpha, 1 beta, 1 beta' and 1 omega subunit. When a sigma factor is associated with the core the holoenzyme is formed, which can initiate transcription.

The catalysed reaction is RNA(n) + a ribonucleoside 5'-triphosphate = RNA(n+1) + diphosphate. Its function is as follows. DNA-dependent RNA polymerase catalyzes the transcription of DNA into RNA using the four ribonucleoside triphosphates as substrates. The protein is DNA-directed RNA polymerase subunit alpha of Treponema pallidum (strain Nichols).